A 427-amino-acid polypeptide reads, in one-letter code: Glutamate-1-semialdehyde 2,1-aminomutase (427 aa).

At Lys-265 the chain carries N6-(pyridoxal phosphate)lysine.

The protein belongs to the class-III pyridoxal-phosphate-dependent aminotransferase family. HemL subfamily. Homodimer. Pyridoxal 5'-phosphate is required as a cofactor.

The protein localises to the cytoplasm. It catalyses the reaction (S)-4-amino-5-oxopentanoate = 5-aminolevulinate. Its pathway is porphyrin-containing compound metabolism; protoporphyrin-IX biosynthesis; 5-aminolevulinate from L-glutamyl-tRNA(Glu): step 2/2. This is Glutamate-1-semialdehyde 2,1-aminomutase from Pseudomonas entomophila (strain L48).